The sequence spans 60 residues: Metallothionein (60 aa).

The beta stretch occupies residues 1 to 28 (MDPCDCAKTGTCNCGTSCTCANCSCTKC). The a divalent metal cation site is built by Cys-4, Cys-6, Cys-12, Cys-14, Cys-18, Cys-20, Cys-23, Cys-25, Cys-28, Cys-32, Cys-33, Cys-35, Cys-36, Cys-40, Cys-43, Cys-47, Cys-49, Cys-54, Cys-58, and Cys-59. Residues 29–60 (KKSCCECCPSGCSKCASGCACKDKTCDTNCCQ) are alpha.

It belongs to the metallothionein superfamily. Type 1 family.

Functionally, metallothioneins have a high content of cysteine residues that bind various heavy metals. The polypeptide is Metallothionein (mt) (Gadus morhua (Atlantic cod)).